Reading from the N-terminus, the 60-residue chain is Ferredoxin (60 aa).

4Fe-4S ferredoxin-type domains are found at residues 2-29 (KVRV…LGDD) and 30-60 (GKAK…SVEE). Residues Cys10, Cys13, and Cys16 each coordinate [4Fe-4S] cluster. Cys20 and Cys43 are oxidised to a cystine. Cys51 lines the [4Fe-4S] cluster pocket.

In terms of assembly, monomer. Requires [4Fe-4S] cluster as cofactor.

Functionally, ferredoxins are iron-sulfur proteins that transfer electrons in a wide variety of metabolic reactions. The sequence is that of Ferredoxin (fdx) from Thermotoga maritima (strain ATCC 43589 / DSM 3109 / JCM 10099 / NBRC 100826 / MSB8).